The sequence spans 354 residues: Probable L-ascorbate-6-phosphate lactonase UlaG (354 aa).

It belongs to the UlaG family. The cofactor is a divalent metal cation.

The protein localises to the cytoplasm. It catalyses the reaction L-ascorbate 6-phosphate + H2O = 3-dehydro-L-gulonate 6-phosphate. The protein operates within cofactor degradation; L-ascorbate degradation; D-xylulose 5-phosphate from L-ascorbate: step 1/4. In terms of biological role, probably catalyzes the hydrolysis of L-ascorbate-6-P into 3-keto-L-gulonate-6-P. Is essential for L-ascorbate utilization under anaerobic conditions. The polypeptide is Probable L-ascorbate-6-phosphate lactonase UlaG (Shigella boydii serotype 4 (strain Sb227)).